A 674-amino-acid chain; its full sequence is E3 ubiquitin ligase Rnf157 (674 aa).

The RING-type zinc-finger motif lies at 277–316 (CVVCLSDVRDTLILPCRHLCLCNACADTLRYQASNCPICR). Disordered regions lie at residues 376–404 (LTPS…GSDI) and 433–610 (QNSS…TGRE). Residues 469–508 (TPESENLTLSSSGAIDQSSCTGTPLSPTISSPEDPLSSSL) show a composition bias toward polar residues. The span at 509–526 (AQSIMSMASSHSQQSQLS) shows a compositional bias: low complexity. Residues 527–537 (TDTVSSMSGSY) are compositionally biased toward polar residues. The span at 583 to 604 (EEMDAEGNVTEEEFASPEEDDG) shows a compositional bias: acidic residues.

The protein localises to the cytoplasm. The enzyme catalyses S-ubiquitinyl-[E2 ubiquitin-conjugating enzyme]-L-cysteine + [acceptor protein]-L-lysine = [E2 ubiquitin-conjugating enzyme]-L-cysteine + N(6)-ubiquitinyl-[acceptor protein]-L-lysine.. Its function is as follows. E3 ubiquitin ligase that ubiquitinates apbb1 for its degradation by the proteasome and thus prevents apoptosis and promotes survival of neurons. Has a dual role in neurons as it is also required for dendrite growth and maintenance for which its ligase activity is not critical. May act as a scaffold molecule to regulate this process. Acts as a downstream effector of the interconnected PI3K and MAPK signaling pathways and thus participates in the regulation of the cell cycle. The sequence is that of E3 ubiquitin ligase Rnf157 (rnf157) from Xenopus laevis (African clawed frog).